A 245-amino-acid chain; its full sequence is Ribonuclease PH (245 aa).

Phosphate is bound by residues arginine 86 and 124-126 (GTR).

This sequence belongs to the RNase PH family. As to quaternary structure, homohexameric ring arranged as a trimer of dimers.

It carries out the reaction tRNA(n+1) + phosphate = tRNA(n) + a ribonucleoside 5'-diphosphate. Its function is as follows. Phosphorolytic 3'-5' exoribonuclease that plays an important role in tRNA 3'-end maturation. Removes nucleotide residues following the 3'-CCA terminus of tRNAs; can also add nucleotides to the ends of RNA molecules by using nucleoside diphosphates as substrates, but this may not be physiologically important. Probably plays a role in initiation of 16S rRNA degradation (leading to ribosome degradation) during starvation. This is Ribonuclease PH from Bacillus cereus (strain ATCC 10987 / NRS 248).